A 385-amino-acid polypeptide reads, in one-letter code: MSVIGIVAEYNPFHSGHEFLLNQARLVSENDPIIVMMSGNYVQRGQMAIMDKWQRAKAALNSGADLVFELPFSFAVQPADIFANGSIRMLSNLGVSELFFGVEDANLNFSYLGQKINQIPKNRMDFRDYTQTYATQYNEMVAREVGHEVNQPNMMLAVAYAVASEQLDTPLHLHPVTRLGSGHDDQLLQDKIISSATAIRNYCLHHPNDLIELKKYLPKGELAALEKQKVYPNWNLLFNFLKYRIESASLEELRSIYQMSEGLEYKMKEEIHNAEDFTSFLRQIKSKRYTYARLRRLCLYTLLNVTEKEMQASYQDVSTLLLGYNSRGRNYLKKIRKDVELPIISKVDKKNAASGTLGLQVRVDRLFEQIMGEDQNFGRRPIEVK.

ATP contacts are provided by residues 7-20 (VAEY…HEFL), Gly-101, Asn-153, and Arg-178.

Belongs to the TmcAL family.

It localises to the cytoplasm. The catalysed reaction is cytidine(34) in elongator tRNA(Met) + acetate + ATP = N(4)-acetylcytidine(34) in elongator tRNA(Met) + AMP + diphosphate. Catalyzes the formation of N(4)-acetylcytidine (ac(4)C) at the wobble position of elongator tRNA(Met), using acetate and ATP as substrates. First activates an acetate ion to form acetyladenylate (Ac-AMP) and then transfers the acetyl group to tRNA to form ac(4)C34. The chain is tRNA(Met) cytidine acetate ligase from Lactobacillus gasseri (strain ATCC 33323 / DSM 20243 / BCRC 14619 / CIP 102991 / JCM 1131 / KCTC 3163 / NCIMB 11718 / NCTC 13722 / AM63).